A 946-amino-acid chain; its full sequence is MKMSSRIGLFKLLILLFFQIYSVYAFTDGSDFTALQALKNEWDTLSKSWKSSDPCGTEWVGITCNNDNRVVSISLTNRNLKGKLPTEISTLSELQTLDLTGNPELSGPLPANIGNLRKLTFLSLMGCAFNGPIPDSIGNLEQLTRLSLNLNKFSGTIPASMGRLSKLYWFDIADNQLEGKLPVSDGASLPGLDMLLQTGHFHFGNNKLSGEIPEKLFSSEMTLLHVLFDGNQFTGSIPESLGLVQNLTVLRLDRNRLSGDIPSSLNNLTNLQELHLSDNKFTGSLPNLTSLTSLYTLDVSNNPLALSPVPSWIPFLNSLSTLRLEDIQLDGPVPTSLFSPLQLQTVSLKHNLINTTLDLGTNYSKQLDFVDLRDNFITGYKSPANNPVNVMLADNQVCQDPANQLSGYCNAVQPNSTFSTLTKCGNHCGKGKEPNQGCHCVYPLTGVFTLRSPSFSGFSNNSNFLKFGESLMTFFKNGKYPVDSVAMRNISENPTDYHLLINLLIFPSGRDRFNQTEMDSINSAFTIQDYKPPPRFGPYIFVADQYKTFSDLEDSKTVSMKVIIGVVVGVVVLLLLLALAGIYALRQKKRAQRATDQMNPFAKWDAGKNEMDAPQLMGTKAFTFEELSKCTNNFSDANDVGGGGYGQVYKGTLPNGQVIAIKRAQQGSMQGAFEFKTEIELLSRVHHKNVVKLLGFCFDQKEQMLVYEYIPNGSLRDGLSGKNGVKLDWTRRLKIALGSGKGLAYLHELADPPIIHRDVKSNNILLDEHLTAKVADFGLSKLVGDPEKAHVTTQVKGTMGYLDPEYYMTNQLTEKSDVYGFGVVMLELLTGKSPIDRGSYVVKEVKKKMDKSRNLYDLQELLDTTIIQNSGNLKGFEKYVDVALQCVEPEGVNRPTMSEVVQELESILRLVGLNPNADSATYEEASGDPYGRDSFEYTGVFPTPKP.

Positions 1–25 (MKMSSRIGLFKLLILLFFQIYSVYA) are cleaved as a signal peptide. Over 26–561 (FTDGSDFTAL…LEDSKTVSMK (536 aa)) the chain is Extracellular. LRR repeat units follow at residues 67–91 (DNRV…ISTL), 92–116 (SELQ…IGNL), 118–140 (KLTF…IGNL), 141–164 (EQLT…MGRL), 166–191 (KLYW…SLPG), 195–219 (LLQT…LFSS), 221–244 (MTLL…LGLV), 245–268 (QNLT…LNNL), 269–293 (TNLQ…SLTS), 295–314 (YTLD…SWIP), 316–340 (LNSL…LFSP), 342–365 (QLQT…NYSK), 367–387 (LDFV…ANNP), and 389–407 (NVML…QLSG). N-linked (GlcNAc...) asparagine glycans are attached at residues Asn246, Asn267, and Asn287. 2 N-linked (GlcNAc...) asparagine glycosylation sites follow: Asn354 and Asn362. N-linked (GlcNAc...) asparagine glycosylation is found at Asn415, Asn460, Asn489, and Asn514. A helical membrane pass occupies residues 562 to 582 (VIIGVVVGVVVLLLLLALAGI). Over 583 to 946 (YALRQKKRAQ…YTGVFPTPKP (364 aa)) the chain is Cytoplasmic. The Protein kinase domain maps to 634–908 (FSDANDVGGG…EVVQELESIL (275 aa)). Residues 640-648 (VGGGGYGQV) and Lys662 contribute to the ATP site. Asp758 acts as the Proton acceptor in catalysis. Residues 919-946 (SATYEEASGDPYGRDSFEYTGVFPTPKP) form a disordered region.

It belongs to the protein kinase superfamily. Ser/Thr protein kinase family.

The protein localises to the membrane. The catalysed reaction is L-seryl-[protein] + ATP = O-phospho-L-seryl-[protein] + ADP + H(+). The enzyme catalyses L-threonyl-[protein] + ATP = O-phospho-L-threonyl-[protein] + ADP + H(+). This chain is Probable leucine-rich repeat receptor-like protein kinase At5g49770, found in Arabidopsis thaliana (Mouse-ear cress).